Here is a 727-residue protein sequence, read N- to C-terminus: Broad-complex core protein isoforms 1/2/3/4/5 (727 aa).

The region spanning 32–97 (VDVTLACEGR…IYHGEVNVHQ (66 aa)) is the BTB domain. Residues 135 to 149 (NSGGRTPLNTHTQSL) are compositionally biased toward polar residues. 5 disordered regions span residues 135–185 (NSGG…SLPS), 218–378 (RGSD…IGDG), 445–496 (INNS…RPTA), 532–583 (PQQQ…ANTP), and 604–626 (STSG…SGGL). The segment covering 227-238 (SGAVGSGSNNNS) has biased composition (low complexity). A compositionally biased stretch (gly residues) spans 281-298 (TGNGNSGNGNGNGNGASN). Positions 341-355 (NDEHSNDSTGEHDAN) are enriched in basic and acidic residues. Composition is skewed to low complexity over residues 445–460 (INNS…NNNN), 475–495 (TPSP…TRPT), and 533–568 (QQQQ…QQQQ). 2 C2H2-type zinc fingers span residues 636-659 (FRCN…QNVH) and 666-689 (PVCN…SIYH). A disordered region spans residues 694-727 (QPKQEPGVGATQAAANSFYHQQHQQQQLNHHSSS). Residues 713–727 (HQQHQQQQLNHHSSS) show a composition bias toward low complexity.

It localises to the nucleus. In terms of biological role, broad-complex proteins are required for puffing and transcription of salivary gland late genes during metamorphosis. This chain is Broad-complex core protein isoforms 1/2/3/4/5 (br), found in Drosophila melanogaster (Fruit fly).